A 254-amino-acid chain; its full sequence is Transmembrane protein 70, mitochondrial (254 aa).

The N-terminal 78 residues, 1 to 78, are a transit peptide targeting the mitochondrion; that stretch reads MLFLALGGPW…PVCWERGVRC (78 aa). Residues 79–112 are Mitochondrial matrix-facing; the sequence is SHTQLDKSEDGRLIYTGNLARTVFGVKCFSYSTS. The chain crosses the membrane as a helical span at residues 113-133; the sequence is LISLAFLPYIFAQNNVIFGSL. At 134–136 the chain is on the mitochondrial intermembrane side; it reads PLQ. The chain crosses the membrane as a helical span at residues 137-157; the sequence is ILFYGTIGSFTVITPALLHFL. The Mitochondrial matrix portion of the chain corresponds to 158 to 254; sequence TKGYVIRLYH…SEKKQLKEEK (97 aa).

It belongs to the TMEM70 family. Homooligomer. Interacts (homooligomer form) with ATP5MC1; this interaction facilitates the oligomer formation of subunit c/ATP5MC1 (c-ring) and the c-ring membrane insertion and also protects ATP5MC1 against intramitochondrial proteolysis. Interacts with the core subunits TMEM126B, NDUFAF1, ECSIT and ACAD9 of the MCIA complex. Interacts with ATP5MC3, TMEM242 and TIMMDC1.

It is found in the mitochondrion inner membrane. Functionally, scaffold protein that participates in the c-ring assembly of mitochondrial ATP synthase (F(1)F(0) ATP synthase or complex V) by facilitating the membrane insertion and oligomer formation of the subunit c/ATP5MC1 through its interaction. Therefore, participates in the early stage of mitochondrial ATP synthase biogenesis and also protects subunit c/ATP5MC1 against intramitochondrial proteolysis. In addition, binds the mitochondrial proton-transporting ATP synthase complexes I and may play a role in the stability of its membrane-bound subassemblies. The polypeptide is Transmembrane protein 70, mitochondrial (Bos taurus (Bovine)).